Reading from the N-terminus, the 837-residue chain is Protein translocase subunit SecA 1 (837 aa).

ATP-binding positions include Gln85, 103–107, and Asp492; that span reads GEGKT. A compositionally biased stretch (basic and acidic residues) spans 787–806; sequence QEVAKGEAVHPKEDGEEPKK. The segment at 787 to 813 is disordered; the sequence is QEVAKGEAVHPKEDGEEPKKKPIRKAV. Zn(2+) contacts are provided by Cys821, Cys823, Cys832, and Cys833.

It belongs to the SecA family. In terms of assembly, monomer and homodimer. Part of the essential Sec protein translocation apparatus which comprises SecA, SecYEG and auxiliary proteins SecDF. Other proteins may also be involved. Zn(2+) is required as a cofactor.

Its subcellular location is the cell membrane. The protein resides in the cytoplasm. The catalysed reaction is ATP + H2O + cellular proteinSide 1 = ADP + phosphate + cellular proteinSide 2.. In terms of biological role, part of the Sec protein translocase complex. Interacts with the SecYEG preprotein conducting channel. Has a central role in coupling the hydrolysis of ATP to the transfer of proteins into and across the cell membrane, serving as an ATP-driven molecular motor driving the stepwise translocation of polypeptide chains across the membrane. The chain is Protein translocase subunit SecA 1 from Geobacillus thermodenitrificans (strain NG80-2).